A 125-amino-acid chain; its full sequence is UPF0225 protein Cgl1438/cg1626 (125 aa).

The protein belongs to the UPF0225 family.

This chain is UPF0225 protein Cgl1438/cg1626, found in Corynebacterium glutamicum (strain ATCC 13032 / DSM 20300 / JCM 1318 / BCRC 11384 / CCUG 27702 / LMG 3730 / NBRC 12168 / NCIMB 10025 / NRRL B-2784 / 534).